The primary structure comprises 732 residues: Engulfment and cell motility protein 2 (732 aa).

At Y48 the chain carries Phosphotyrosine. The 175-residue stretch at A323–L497 folds into the ELMO domain. Phosphoserine is present on S515. The PH domain occupies S565–L686. The SH3-binding signature appears at P712–P719. The residue at position 729 (Y729) is a Phosphotyrosine.

As to quaternary structure, interacts directly with the SH3-domain of DOCK1 via its SH3-binding site. Probably forms a heterotrimeric complex with DOCK1 and RAC1. Interacts with ARHGEF16, DOCK4 and EPHA2; mediates activation of RAC1 by EPHA2. Interacts with ADGRB3. Interacts with AUTS2; the interaction is direct.

The protein resides in the cytoplasm. It localises to the cytosol. Its subcellular location is the membrane. Its function is as follows. Involved in cytoskeletal rearrangements required for phagocytosis of apoptotic cells and cell motility. Acts in association with DOCK1 and CRK. Was initially proposed to be required in complex with DOCK1 to activate Rac Rho small GTPases. May enhance the guanine nucleotide exchange factor (GEF) activity of DOCK1. The sequence is that of Engulfment and cell motility protein 2 (Elmo2) from Mus musculus (Mouse).